The following is a 217-amino-acid chain: MKSTVEQAMLFEEKSIFENQAIEQGYSQVAGVDEAGRGPLAGPVVAGACILPRGKVFLGIDDSKKLTPKQRRYLYELLLEDPEVDCGVGVISVERIDEINILEATKEAMVQAIASLRSTPDFLLVDGLFLPHKVPSLKIIKGDARSVSIAAASIIAKEYRDELMRKLHVEYPEYGFDKHKGYGTAAHLQALKHFGPCVYHRKSFSPVKESIQEGVCQ.

Positions 27–216 (SQVAGVDEAG…VKESIQEGVC (190 aa)) constitute an RNase H type-2 domain. The a divalent metal cation site is built by Asp33, Glu34, and Asp126.

Belongs to the RNase HII family. Requires Mn(2+) as cofactor. The cofactor is Mg(2+).

It localises to the cytoplasm. It carries out the reaction Endonucleolytic cleavage to 5'-phosphomonoester.. Endonuclease that specifically degrades the RNA of RNA-DNA hybrids. This Chlamydia trachomatis serovar D (strain ATCC VR-885 / DSM 19411 / UW-3/Cx) protein is Ribonuclease HII (rnhB).